A 473-amino-acid chain; its full sequence is Probable cytosolic iron-sulfur protein assembly protein 1 (473 aa).

Residues 1–25 form a disordered region; that stretch reads MPSSTPGGSLKHLSDLTPPSQDRTW. 2 WD repeats span residues 11–58 and 62–104; these read KHLS…LLST and GHKR…GRAE. The disordered stretch occupies residues 112-133; the sequence is GGLAEADRQEGDDTDGDEEDED. A compositionally biased stretch (acidic residues) spans 123–133; the sequence is DDTDGDEEDED. WD repeat units follow at residues 144–183, 191–230, 235–313, and 341–380; these read GHDS…DNNF, EHSG…WGQV, GHEG…KPPP, and MHDL…KPPV. Residues 377 to 405 are disordered; the sequence is KPPVHTTSEQDKPDSARETQKANGERTAP. Residues 384 to 400 show a composition bias toward basic and acidic residues; the sequence is SEQDKPDSARETQKANG. The WD 7 repeat unit spans residues 438–473; that stretch reads SQQQNFDNSEMDHANEEEVLLSTGDDGVVRVWTLER.

Belongs to the WD repeat CIA1 family.

Essential component of the cytosolic iron-sulfur (Fe/S) protein assembly machinery. Required for the maturation of extramitochondrial Fe/S proteins. This chain is Probable cytosolic iron-sulfur protein assembly protein 1, found in Coccidioides immitis (strain RS) (Valley fever fungus).